The following is a 193-amino-acid chain: Xanthine phosphoribosyltransferase (193 aa).

Residues L20 and N27 each coordinate xanthine. 129–133 (ANGKA) contributes to the 5-phospho-alpha-D-ribose 1-diphosphate binding site. K157 contributes to the xanthine binding site.

It belongs to the purine/pyrimidine phosphoribosyltransferase family. Xpt subfamily. Homodimer.

It is found in the cytoplasm. It catalyses the reaction XMP + diphosphate = xanthine + 5-phospho-alpha-D-ribose 1-diphosphate. It functions in the pathway purine metabolism; XMP biosynthesis via salvage pathway; XMP from xanthine: step 1/1. Functionally, converts the preformed base xanthine, a product of nucleic acid breakdown, to xanthosine 5'-monophosphate (XMP), so it can be reused for RNA or DNA synthesis. In Bifidobacterium longum (strain NCC 2705), this protein is Xanthine phosphoribosyltransferase.